The chain runs to 375 residues: 23S rRNA (uracil(747)-C(5))-methyltransferase RlmC (375 aa).

The [4Fe-4S] cluster site is built by cysteine 3, cysteine 11, cysteine 14, and cysteine 87. S-adenosyl-L-methionine contacts are provided by glutamine 212, phenylalanine 241, glutamate 262, and asparagine 307. Cysteine 334 serves as the catalytic Nucleophile.

The protein belongs to the class I-like SAM-binding methyltransferase superfamily. RNA M5U methyltransferase family. RlmC subfamily.

The catalysed reaction is uridine(747) in 23S rRNA + S-adenosyl-L-methionine = 5-methyluridine(747) in 23S rRNA + S-adenosyl-L-homocysteine + H(+). Catalyzes the formation of 5-methyl-uridine at position 747 (m5U747) in 23S rRNA. The sequence is that of 23S rRNA (uracil(747)-C(5))-methyltransferase RlmC from Shigella dysenteriae serotype 1 (strain Sd197).